The chain runs to 408 residues: LL-diaminopimelate aminotransferase (408 aa).

2 residues coordinate substrate: Tyr15 and Gly42. Pyridoxal 5'-phosphate-binding positions include Tyr72, 108-109, Tyr132, Asn187, Tyr218, and 246-248; these read SK and SFS. Residues Lys109, Tyr132, and Asn187 each coordinate substrate. An N6-(pyridoxal phosphate)lysine modification is found at Lys249. Residues Arg257 and Asn292 each contribute to the pyridoxal 5'-phosphate site. 2 residues coordinate substrate: Asn292 and Arg388.

Belongs to the class-I pyridoxal-phosphate-dependent aminotransferase family. LL-diaminopimelate aminotransferase subfamily. As to quaternary structure, homodimer. It depends on pyridoxal 5'-phosphate as a cofactor.

It catalyses the reaction (2S,6S)-2,6-diaminopimelate + 2-oxoglutarate = (S)-2,3,4,5-tetrahydrodipicolinate + L-glutamate + H2O + H(+). Its pathway is amino-acid biosynthesis; L-lysine biosynthesis via DAP pathway; LL-2,6-diaminopimelate from (S)-tetrahydrodipicolinate (aminotransferase route): step 1/1. Functionally, involved in the synthesis of meso-diaminopimelate (m-DAP or DL-DAP), required for both lysine and peptidoglycan biosynthesis. Catalyzes the direct conversion of tetrahydrodipicolinate to LL-diaminopimelate. This chain is LL-diaminopimelate aminotransferase, found in Leptospira borgpetersenii serovar Hardjo-bovis (strain L550).